The sequence spans 292 residues: 4-diphosphocytidyl-2-C-methyl-D-erythritol kinase (292 aa).

Lys20 is a catalytic residue. ATP is bound at residue 103-113; sequence PMGGGIGGGSS. Asp145 is a catalytic residue.

Belongs to the GHMP kinase family. IspE subfamily.

It catalyses the reaction 4-CDP-2-C-methyl-D-erythritol + ATP = 4-CDP-2-C-methyl-D-erythritol 2-phosphate + ADP + H(+). The protein operates within isoprenoid biosynthesis; isopentenyl diphosphate biosynthesis via DXP pathway; isopentenyl diphosphate from 1-deoxy-D-xylulose 5-phosphate: step 3/6. Catalyzes the phosphorylation of the position 2 hydroxy group of 4-diphosphocytidyl-2C-methyl-D-erythritol. In Cupriavidus necator (strain ATCC 17699 / DSM 428 / KCTC 22496 / NCIMB 10442 / H16 / Stanier 337) (Ralstonia eutropha), this protein is 4-diphosphocytidyl-2-C-methyl-D-erythritol kinase.